The following is a 556-amino-acid chain: Sensory neuron membrane protein 2 (556 aa).

At 1–6 the chain is on the cytoplasmic side; that stretch reads MIHWSL. A helical transmembrane segment spans residues 7 to 27; that stretch reads IVSALGVCVAVLGGYCGWILF. At 28–522 the chain is on the extracellular side; sequence PNMVHKKVEQ…KLINTLKTLN (495 aa). 4 N-linked (GlcNAc...) asparagine glycosylation sites follow: N66, N274, N310, and N324. Intrachain disulfides connect C320-C388 and C349-C415. Residues 523 to 543 form a helical membrane-spanning segment; sequence IVHWATLCGGIGVAVACLIYY. The Cytoplasmic segment spans residues 544-556; it reads IYQRGRVVEPPVK.

This sequence belongs to the CD36 family. As to expression, detected in the head and to a lesser extent in legs and wings.

The protein localises to the cell membrane. Plays an olfactory role that is not restricted to pheromone sensitivity. The chain is Sensory neuron membrane protein 2 from Drosophila melanogaster (Fruit fly).